The primary structure comprises 116 residues: Protein Rev (116 aa).

Phosphoserine; by host CK2 occurs at positions 5 and 8. The homomultimerization stretch occupies residues 18-26 (LIKFLYQSN). The interval 23 to 49 (YQSNPPPNPEGTRQARRNRRRRWRERQ) is disordered. The short motif at 34–50 (TRQARRNRRRRWRERQR) is the Nuclear localization signal and RNA-binding (RRE) element. Positions 36-47 (QARRNRRRRWRE) are enriched in basic residues. The short motif at 73–84 (LQLPPLERLTLD) is the Nuclear export signal and binding to XPO1 element. Phosphoserine; by host occurs at positions 92 and 99.

Belongs to the HIV-1 REV protein family. As to quaternary structure, homomultimer; when bound to the RRE. Multimeric assembly is essential for activity and may involve XPO1. Binds to human KPNB1, XPO1, TNPO1, RANBP5 and IPO7. Interacts with the viral Integrase. Interacts with human KHDRBS1. Interacts with human NAP1; this interaction decreases Rev multimerization and stimulates its activity. Interacts with human DEAD-box helicases DDX3 and DDX24; these interactions may serve for viral RNA export to the cytoplasm and packaging, respectively. Interacts with human PSIP1; this interaction may inhibit HIV-1 DNA integration by promoting dissociation of the Integrase-LEDGF/p75 complex. Asymmetrically arginine dimethylated at one site by host PRMT6. Methylation impairs the RNA-binding activity and export of viral RNA from the nucleus to the cytoplasm. Post-translationally, phosphorylated by protein kinase CK2. Presence of, and maybe binding to the N-terminus of the regulatory beta subunit of CK2 is necessary for CK2-mediated Rev's phosphorylation.

It localises to the host nucleus. It is found in the host nucleolus. The protein localises to the host cytoplasm. Its function is as follows. Escorts unspliced or incompletely spliced viral pre-mRNAs (late transcripts) out of the nucleus of infected cells. These pre-mRNAs carry a recognition sequence called Rev responsive element (RRE) located in the env gene, that is not present in fully spliced viral mRNAs (early transcripts). This function is essential since most viral proteins are translated from unspliced or partially spliced pre-mRNAs which cannot exit the nucleus by the pathway used by fully processed cellular mRNAs. Rev itself is translated from a fully spliced mRNA that readily exits the nucleus. Rev's nuclear localization signal (NLS) binds directly to KPNB1/Importin beta-1 without previous binding to KPNA1/Importin alpha-1. KPNB1 binds to the GDP bound form of RAN (Ran-GDP) and targets Rev to the nucleus. In the nucleus, the conversion from Ran-GDP to Ran-GTP dissociates Rev from KPNB1 and allows Rev's binding to the RRE in viral pre-mRNAs. Rev multimerization on the RRE via cooperative assembly exposes its nuclear export signal (NES) to the surface. Rev can then form a complex with XPO1/CRM1 and Ran-GTP, leading to nuclear export of the complex. Conversion from Ran-GTP to Ran-GDP mediates dissociation of the Rev/RRE/XPO1/RAN complex, so that Rev can return to the nucleus for a subsequent round of export. Beside KPNB1, also seems to interact with TNPO1/Transportin-1, RANBP5/IPO5 and IPO7/RANBP7 for nuclear import. The nucleoporin-like HRB/RIP is an essential cofactor that probably indirectly interacts with Rev to release HIV RNAs from the perinuclear region to the cytoplasm. This Human immunodeficiency virus type 1 group M subtype B (isolate HXB3) (HIV-1) protein is Protein Rev.